Here is a 146-residue protein sequence, read N- to C-terminus: Large ribosomal subunit protein uL15 (146 aa).

The segment covering 1-18 has biased composition (basic and acidic residues); sequence MKLHELKPSEGSRKERNR. The tract at residues 1–50 is disordered; sequence MKLHELKPSEGSRKERNRVGRGTGSGNGKTSGRGHKGQKARSGGGVRLGF. Residues 21–31 are compositionally biased toward gly residues; that stretch reads RGTGSGNGKTS.

Belongs to the universal ribosomal protein uL15 family. Part of the 50S ribosomal subunit.

Its function is as follows. Binds to the 23S rRNA. This is Large ribosomal subunit protein uL15 from Listeria monocytogenes serotype 4b (strain CLIP80459).